Consider the following 805-residue polypeptide: Ubiquitin carboxyl-terminal hydrolase 10-B (805 aa).

2 disordered regions span residues 136–173 and 284–305; these read AIPD…YLEG and DTTE…EDTV. Polar residues-rich tracts occupy residues 143–153 and 284–298; these read NADSDGTSGTG and DTTE…QTLE. The region spanning 422–802 is the USP domain; that stretch reads RGLINKGNWC…TAYLLYYRRV (381 aa). Cys431 acts as the Nucleophile in catalysis. The tract at residues 573–600 is disordered; the sequence is EEVNKEEQEGSDEEWEQVGPRNKSSVTR. Residue His756 is the Proton acceptor of the active site.

The protein belongs to the peptidase C19 family. USP10 subfamily.

Its subcellular location is the cytoplasm. It localises to the nucleus. It catalyses the reaction Thiol-dependent hydrolysis of ester, thioester, amide, peptide and isopeptide bonds formed by the C-terminal Gly of ubiquitin (a 76-residue protein attached to proteins as an intracellular targeting signal).. Its function is as follows. Hydrolase that can remove conjugated ubiquitin from target proteins such as p53/tp53, rps2/us5, rps3/us3, rps10/eS10, becn1, snx3 and cftr. Acts as an essential regulator of p53/tp53 stability: in unstressed cells, specifically deubiquitinates p53/tp53 in the cytoplasm, leading to counteracts MDM2 action and stabilize p53/tp53. Following DNA damage, translocates to the nucleus and deubiquitinates p53/tp53, leading to regulate the p53/TP53-dependent DNA damage response. Component of a regulatory loop that controls autophagy and p53/tp53 levels. Plays a key role in 40S ribosome subunit recycling when a ribosome has stalled during translation: acts both by inhibiting formation of stress granules, which store stalled translation pre-initiation complexes, and mediating deubiquitination of 40S ribosome subunits. Deubiquitinates cftr in early endosomes, enhancing its endocytic recycling. The sequence is that of Ubiquitin carboxyl-terminal hydrolase 10-B (usp10-b) from Xenopus laevis (African clawed frog).